The sequence spans 140 residues: Nucleoside diphosphate kinase (140 aa).

ATP is bound by residues lysine 11, phenylalanine 59, arginine 87, threonine 93, arginine 104, and asparagine 114. Residue histidine 117 is the Pros-phosphohistidine intermediate of the active site.

Belongs to the NDK family. Homotetramer. The cofactor is Mg(2+).

It is found in the cytoplasm. The enzyme catalyses a 2'-deoxyribonucleoside 5'-diphosphate + ATP = a 2'-deoxyribonucleoside 5'-triphosphate + ADP. The catalysed reaction is a ribonucleoside 5'-diphosphate + ATP = a ribonucleoside 5'-triphosphate + ADP. Its function is as follows. Major role in the synthesis of nucleoside triphosphates other than ATP. The ATP gamma phosphate is transferred to the NDP beta phosphate via a ping-pong mechanism, using a phosphorylated active-site intermediate. This Rhizobium rhizogenes (strain K84 / ATCC BAA-868) (Agrobacterium radiobacter) protein is Nucleoside diphosphate kinase.